A 374-amino-acid chain; its full sequence is Phosphate acyltransferase (374 aa).

Residues 323–374 form a disordered region; that stretch reads AEMVDPREPESNPRRRTRPLQVYSGSGPEVLPLGSLERTSSRCPEPVEDAQP. Over residues 326-335 the composition is skewed to basic and acidic residues; it reads VDPREPESNP.

The protein belongs to the PlsX family. Homodimer. Probably interacts with PlsY.

It is found in the cytoplasm. The enzyme catalyses a fatty acyl-[ACP] + phosphate = an acyl phosphate + holo-[ACP]. The protein operates within lipid metabolism; phospholipid metabolism. Catalyzes the reversible formation of acyl-phosphate (acyl-PO(4)) from acyl-[acyl-carrier-protein] (acyl-ACP). This enzyme utilizes acyl-ACP as fatty acyl donor, but not acyl-CoA. The chain is Phosphate acyltransferase from Synechococcus sp. (strain JA-2-3B'a(2-13)) (Cyanobacteria bacterium Yellowstone B-Prime).